The primary structure comprises 214 residues: RING-H2 finger protein ATL67 (214 aa).

Residues 33 to 53 (LGFGYSIAIALGFLVLLSTVL) traverse the membrane as a helical segment. An RING-type; atypical zinc finger spans residues 138–180 (CSICLCEYKEAEMLRMMPECKHYFHLCCLDAWLKLNGSCPVCR).

It belongs to the RING-type zinc finger family. ATL subfamily.

The protein resides in the membrane. It carries out the reaction S-ubiquitinyl-[E2 ubiquitin-conjugating enzyme]-L-cysteine + [acceptor protein]-L-lysine = [E2 ubiquitin-conjugating enzyme]-L-cysteine + N(6)-ubiquitinyl-[acceptor protein]-L-lysine.. The protein operates within protein modification; protein ubiquitination. This chain is RING-H2 finger protein ATL67 (ATL67), found in Arabidopsis thaliana (Mouse-ear cress).